A 283-amino-acid chain; its full sequence is 2-dehydro-3-deoxyphosphooctonate aldolase (283 aa).

The protein belongs to the KdsA family.

The protein resides in the cytoplasm. It catalyses the reaction D-arabinose 5-phosphate + phosphoenolpyruvate + H2O = 3-deoxy-alpha-D-manno-2-octulosonate-8-phosphate + phosphate. Its pathway is carbohydrate biosynthesis; 3-deoxy-D-manno-octulosonate biosynthesis; 3-deoxy-D-manno-octulosonate from D-ribulose 5-phosphate: step 2/3. It participates in bacterial outer membrane biogenesis; lipopolysaccharide biosynthesis. This chain is 2-dehydro-3-deoxyphosphooctonate aldolase, found in Vibrio parahaemolyticus serotype O3:K6 (strain RIMD 2210633).